Here is an 883-residue protein sequence, read N- to C-terminus: Glutamate receptor 2 (883 aa).

The N-terminal stretch at 1 to 21 (MQKIMHISVLLSPVLWGLIFG) is a signal peptide. The Extracellular segment spans residues 22–543 (VSSNSIQIGG…GVFSFLDPLA (522 aa)). Cys78 and Cys330 form a disulfide bridge. Asn256, Asn370, Asn406, and Asn413 each carry an N-linked (GlcNAc...) asparagine glycan. Pro499, Thr501, and Arg506 together coordinate L-glutamate. A helical transmembrane segment spans residues 544-564 (YEIWMCIVFAYIGVSVVLFLV). Over 565–591 (SRFSPYEWHTEEFEDGRETQSSESTNE) the chain is Cytoplasmic. Positions 592–607 (FGIFNSLWFSLGAFMQ) form an intramembrane region, helical; Pore-forming. Residues 608 to 610 (QGC) lie within the membrane without spanning it. Cys610 carries the S-palmitoyl cysteine lipid modification. Residues 611-616 (DISPRS) are Cytoplasmic-facing. The chain crosses the membrane as a helical span at residues 617–637 (LSGRIVGGVWWFFTLIIISSY). The Extracellular segment spans residues 638 to 812 (TANLAAFLTV…EKTSALSLSN (175 aa)). L-glutamate is bound by residues Ser675 and Thr676. Ser683 carries the phosphoserine; by PKC modification. Phosphoserine; by PKG is present on Ser717. Glu726 serves as a coordination point for L-glutamate. A disulfide bridge connects residues Cys739 and Cys794. A helical transmembrane segment spans residues 813–833 (VAGVFYILVGGLGLAMLVALI). Over 834–883 (EFCYKSRAEAKRMKVAKNPQNINPSSSQNSQNFATYKEGYNVYGIESVKI) the chain is Cytoplasmic. Cys836 carries the S-palmitoyl cysteine lipid modification. Residues Ser860 and Ser863 each carry the phosphoserine modification. Residues 867 to 877 (ATYKEGYNVYG) form a required for interaction with IQSEC1 region. Phosphotyrosine is present on Tyr876. Ser880 carries the phosphoserine modification.

The protein belongs to the glutamate-gated ion channel (TC 1.A.10.1) family. GRIA2 subfamily. Homotetramer or heterotetramer of pore-forming glutamate receptor subunits. Tetramers may be formed by the dimerization of dimers. May interact with MPP4. Forms a ternary complex with GRIP1 and CSPG4. Interacts with ATAD1 in an ATP-dependent manner. ATAD1-catalyzed ATP hydrolysis disrupts binding to ATAD1 and to GRIP1 and leads to AMPAR complex disassembly. Interacts with GRIP2. Interacts with GRIP1. Interacts with NSF via its C-terminus. Interacts with CACNG2, PICK1 and GRIP2. Interacts with GRIA1 and SYNDIG1. Part of a complex containing GRIA2, NSF and NAPA and/or NAPB. Interacts with SNX27 (via PDZ domain); the interaction is required for recycling to the plasma membrane when endocytosed and prevent degradation in lysosomes. Interacts with LRFN1. Found in a complex with GRIA1, GRIA3, GRIA4, CNIH2, CNIH3, CACNG2, CACNG3, CACNG4, CACNG5, CACNG7 and CACNG8. Interacts with CACNG5. Interacts with OLFM2. Interacts with AP4B1, AP4E1 and AP4M1; probably indirect it mediates the somatodendritic localization of GRIA2 in neurons. Forms a complex with GRIP1, NSG1 and STX12; controls the intracellular fate of AMPAR and the endosomal sorting of the GRIA2 subunit toward recycling and membrane targeting. Interacts with IQSEC1; the interaction is required for ARF6 activation. Interacts (heterotetramer form) with CNIH2 and CNIH3; this interaction promotes expression at the plasma membrane and extensively modulates their gating properties by slowing deactivation and desensitization kinetics. In terms of processing, palmitoylated. Depalmitoylated upon L-glutamate stimulation. Cys-610 palmitoylation leads to Golgi retention and decreased cell surface expression. In contrast, Cys-836 palmitoylation does not affect cell surface expression but regulates stimulation-dependent endocytosis. Post-translationally, phosphorylation at Tyr-876 is required for interaction with IQSEC1 and ARF6 activation, which in turn triggers AMPAR internalization for persistent synaptic depression. Ubiquitinated by RNF167, leading to its degradation. In terms of processing, N-glycosylated. As to expression, detected in forebrain. Detected in dendrites of neuronal cells. Expressed in the pyramidal cell layers of CA1 and CA3 and in the granule cell layer of the dentate gyrus.

It localises to the cell membrane. Its subcellular location is the postsynaptic cell membrane. The protein localises to the postsynaptic density membrane. It carries out the reaction Ca(2+)(in) = Ca(2+)(out). The catalysed reaction is Na(+)(in) = Na(+)(out). Ionotropic glutamate receptor that functions as a ligand-gated cation channel, gated by L-glutamate and glutamatergic agonists such as alpha-amino-3-hydroxy-5-methyl-4-isoxazolepropionic acid (AMPA), quisqualic acid, and kainic acid. L-glutamate acts as an excitatory neurotransmitter at many synapses in the central nervous system and plays an important role in fast excitatory synaptic transmission. Binding of the excitatory neurotransmitter L-glutamate induces a conformation change, leading to the opening of the cation channel, and thereby converts the chemical signal to an electrical impulse upon entry of monovalent and divalent cations such as sodium and calcium. The receptor then desensitizes rapidly and enters in a transient inactive state, characterized by the presence of bound agonist. In the presence of CACNG4 or CACNG7 or CACNG8, shows resensitization which is characterized by a delayed accumulation of current flux upon continued application of L-glutamate. Through complex formation with NSG1, GRIP1 and STX12 controls the intracellular fate of AMPAR and the endosomal sorting of the GRIA2 subunit toward recycling and membrane targeting. The protein is Glutamate receptor 2 of Rattus norvegicus (Rat).